The following is a 273-amino-acid chain: Photosystem I chlorophyll a/b-binding protein 3-1, chloroplastic (273 aa).

Residues 1-39 (MAAQALVSSSLTSSVQTARQIFGSKPVASASQKKSSFVV) constitute a chloroplast transit peptide. Position 56 (tryptophan 56) interacts with chlorophyll b. Chlorophyll a is bound by residues phenylalanine 76, serine 82, and glutamate 100. Chlorophyll b is bound at residue arginine 105. The helical transmembrane segment at 106 to 126 (FAMLGAAGAIAPEILGKAGLI) threads the bilayer. A chlorophyll b-binding site is contributed by isoleucine 140. A helical transmembrane segment spans residues 146-166 (YTYWADNYTLFVLEMALMGFA). Chlorophyll b is bound by residues glutamate 167 and arginine 170. Serine 195 is subject to Phosphoserine. 6 residues coordinate chlorophyll a: lysine 224, glutamate 225, asparagine 228, arginine 230, glutamine 242, and histidine 257. A helical transmembrane segment spans residues 231–251 (LAMLAILGYFIQGLVTGVGPY). Phenylalanine 272 provides a ligand contact to chlorophyll b.

This sequence belongs to the light-harvesting chlorophyll a/b-binding (LHC) protein family. As to quaternary structure, the LHC complex consists of chlorophyll a-b binding proteins. Red-emitting heterodimer with LHCA2. Interacts with LHCA5. Binds to carotenoids. Binds at least 14 chlorophylls (8 Chl-a and 6 Chl-b) and carotenoids such as lutein and neoxanthin. is required as a cofactor. Post-translationally, photoregulated by reversible phosphorylation of its threonine residues.

It is found in the plastid. The protein localises to the chloroplast thylakoid membrane. The light-harvesting complex (LHC) functions as a light receptor, it captures and delivers excitation energy to photosystems with which it is closely associated, here photosystem I. This is Photosystem I chlorophyll a/b-binding protein 3-1, chloroplastic from Arabidopsis thaliana (Mouse-ear cress).